A 159-amino-acid polypeptide reads, in one-letter code: MVKLRLKRYGKKRQPSYRIIAIESKSRREARPLEELGYYNPRTKETVLQTAGLLKWLRCGAQPTETVDSLLKKAGIYEMLKAGEGGVVASIRIPAMAKPEAGIPEAAEEAPATESVAEAEVADVPESELSEAATETAAAELSPPEAEVEKPQVEEAVEA.

Over residues 102–119 (GIPEAAEEAPATESVAEA) the composition is skewed to low complexity. The interval 102-159 (GIPEAAEEAPATESVAEAEVADVPESELSEAATETAAAELSPPEAEVEKPQVEEAVEA) is disordered. Residues 120–129 (EVADVPESEL) show a composition bias toward acidic residues. A compositionally biased stretch (low complexity) spans 130–145 (SEAATETAAAELSPPE).

Belongs to the bacterial ribosomal protein bS16 family.

The polypeptide is Small ribosomal subunit protein bS16 (Synechococcus sp. (strain JA-2-3B'a(2-13)) (Cyanobacteria bacterium Yellowstone B-Prime)).